The sequence spans 341 residues: L-sulfolactate dehydrogenase (341 aa).

It belongs to the LDH2/MDH2 oxidoreductase family.

The protein resides in the cytoplasm. It catalyses the reaction a (2S)-2-hydroxycarboxylate + NAD(+) = a 2-oxocarboxylate + NADH + H(+). Its pathway is cofactor biosynthesis; coenzyme M biosynthesis; sulfoacetaldehyde from phosphoenolpyruvate and sulfite: step 3/4. It functions in the pathway cofactor biosynthesis; 5,6,7,8-tetrahydromethanopterin biosynthesis. Its function is as follows. Catalyzes the reduction of sulfopyruvate to (R)-sulfolactate. Involved in the biosynthesis of both coenzyme M (with (R)-sulfolactate) and methanopterin (with alpha-ketoglutarate). In Methanothermobacter thermautotrophicus (strain ATCC 29096 / DSM 1053 / JCM 10044 / NBRC 100330 / Delta H) (Methanobacterium thermoautotrophicum), this protein is L-sulfolactate dehydrogenase (comC).